Reading from the N-terminus, the 179-residue chain is Plasmid-derived single-stranded DNA-binding protein (179 aa).

In terms of domain architecture, SSB spans 6 to 110; the sequence is INKVILVGRL…ILVKTTGTMQ (105 aa). The DNA-binding element occupies 55 to 61; it reads WHRVVLF. The disordered stretch occupies residues 117–179; that stretch reads GAQTQPEEGQ…DYGFSDDIPF (63 aa). Residues 118–132 are compositionally biased toward polar residues; that stretch reads AQTQPEEGQQFSGQP. Residues 145–155 show a composition bias toward basic residues; the sequence is GGAKTKGRGRK. Over residues 167–179 the composition is skewed to acidic residues; sequence EGDDYGFSDDIPF.

Homotetramer.

Functionally, may contribute to the conjugative processing of DNA. It has a functional relationship with Psi (plasmid-mediated sos inhibition) proteins. The polypeptide is Plasmid-derived single-stranded DNA-binding protein (ssbF) (Escherichia coli (strain K12)).